A 154-amino-acid chain; its full sequence is Putative ankyrin repeat protein RBE_1220 (154 aa).

2 ANK repeats span residues 78-108 and 113-142; these read EKVN…NVDQ and NSRT…ILIL.

This Rickettsia bellii (strain RML369-C) protein is Putative ankyrin repeat protein RBE_1220.